A 168-amino-acid polypeptide reads, in one-letter code: Ribosome maturation factor RimM (168 aa).

In terms of domain architecture, PRC barrel spans 94 to 167 (DGNYYHHQII…KVIIELLDGL (74 aa)).

It belongs to the RimM family. In terms of assembly, binds ribosomal protein uS19.

It is found in the cytoplasm. Its function is as follows. An accessory protein needed during the final step in the assembly of 30S ribosomal subunit, possibly for assembly of the head region. Essential for efficient processing of 16S rRNA. May be needed both before and after RbfA during the maturation of 16S rRNA. It has affinity for free ribosomal 30S subunits but not for 70S ribosomes. This is Ribosome maturation factor RimM from Ligilactobacillus salivarius (strain UCC118) (Lactobacillus salivarius).